A 101-amino-acid polypeptide reads, in one-letter code: Small ribosomal subunit protein uS14A (101 aa).

Composition is skewed to basic and acidic residues over residues 28–44 (KETI…RAEA) and 61–70 (RNRDAADGRP). Residues 28-74 (KETIRRPSSSEDERAEARAALQRLPRDASPVRLRNRDAADGRPRGHL) are disordered.

This sequence belongs to the universal ribosomal protein uS14 family. Part of the 30S ribosomal subunit. Contacts proteins S3 and S10.

Its function is as follows. Binds 16S rRNA, required for the assembly of 30S particles and may also be responsible for determining the conformation of the 16S rRNA at the A site. This chain is Small ribosomal subunit protein uS14A, found in Rhodococcus jostii (strain RHA1).